Reading from the N-terminus, the 367-residue chain is MSLRRIMVTAVRNLHPVTLLPSPRINILYGSNGSGKTSVLEAVHLLGLARSFRSTRLNPVIQYEQAACTVFGEVQLTEGGTSNLGVSRERQGEFTIRIDGQNARSAAQLAELLPLQLINPDSFRLLEGAPKIRRQFLDWGVFHVEPRFLPAWQRLQKALRQRNSWLRHGTLDPASQAAWDRELCLASAEIDEYRRNYIKALKPVFERTLSELVELDGLTLSYYRGWDKDRELQEVLASSLLRDQQMGHTQAGPQRADLRLRLAGNNAADILSRGQQKLVVCALRIAQGHLVSQARRGHCIYLVDDLPSELDDQHRRALCRLLEELRCQVFITCVDHELLREGWQTETPVALFHVEQGRITQTHDHRE.

An ATP-binding site is contributed by 30–37 (GSNGSGKT).

The protein belongs to the RecF family.

It is found in the cytoplasm. Functionally, the RecF protein is involved in DNA metabolism; it is required for DNA replication and normal SOS inducibility. RecF binds preferentially to single-stranded, linear DNA. It also seems to bind ATP. The polypeptide is DNA replication and repair protein RecF (Pseudomonas putida (strain ATCC 700007 / DSM 6899 / JCM 31910 / BCRC 17059 / LMG 24140 / F1)).